Consider the following 191-residue polypeptide: Lipid A acyltransferase PagP (191 aa).

An N-terminal signal peptide occupies residues 1 to 26 (MLKVNKYVILIIAFVSQMMFSTTAQA). Catalysis depends on residues histidine 63, aspartate 106, and serine 107.

Belongs to the lipid A palmitoyltransferase family. In terms of assembly, homodimer.

It localises to the cell outer membrane. It catalyses the reaction a lipid A + a 1,2-diacyl-sn-glycero-3-phosphocholine = a hepta-acyl lipid A + a 2-acyl-sn-glycero-3-phosphocholine. It carries out the reaction a lipid IVA + a 1,2-diacyl-sn-glycero-3-phosphocholine = a lipid IVB + a 2-acyl-sn-glycero-3-phosphocholine. The catalysed reaction is a lipid IIA + a 1,2-diacyl-sn-glycero-3-phosphocholine = a lipid IIB + a 2-acyl-sn-glycero-3-phosphocholine. Transfers a fatty acid residue from the sn-1 position of a phospholipid to the N-linked hydroxyfatty acid chain on the proximal unit of lipid A or its precursors. This chain is Lipid A acyltransferase PagP, found in Enterobacter lignolyticus (strain SCF1).